The primary structure comprises 508 residues: Mitochondrial distribution and morphology protein 10 (508 aa).

Residues 160–195 (PAHPTSTRPTPPQTPPSHTRQPSEPSTPAPSPTPGN) form a disordered region.

The protein belongs to the MDM10 family. As to quaternary structure, component of the ER-mitochondria encounter structure (ERMES) or MDM complex, composed of MMM1, MDM10, MDM12 and MDM34. Associates with the mitochondrial outer membrane sorting assembly machinery SAM(core) complex.

It localises to the mitochondrion outer membrane. Functionally, component of the ERMES/MDM complex, which serves as a molecular tether to connect the endoplasmic reticulum and mitochondria. Components of this complex are involved in the control of mitochondrial shape and protein biogenesis and may function in phospholipid exchange. MDM10 is involved in the late assembly steps of the general translocase of the mitochondrial outer membrane (TOM complex). Functions in the TOM40-specific route of the assembly of outer membrane beta-barrel proteins, including the association of TOM40 with the receptor TOM22 and small TOM proteins. Can associate with the SAM(core) complex as well as the MDM12-MMM1 complex, both involved in late steps of the major beta-barrel assembly pathway, that is responsible for biogenesis of all outer membrane beta-barrel proteins. May act as a switch that shuttles between both complexes and channels precursor proteins into the TOM40-specific pathway. Plays a role in mitochondrial morphology and in the inheritance of mitochondria. This Cryptococcus neoformans var. neoformans serotype D (strain JEC21 / ATCC MYA-565) (Filobasidiella neoformans) protein is Mitochondrial distribution and morphology protein 10.